Here is a 210-residue protein sequence, read N- to C-terminus: Keratin-associated protein 4-9 (210 aa).

28 consecutive repeat copies span residues 24–28 (CCRPS), 29–33 (CCETT), 34–38 (CCRTT), 39–43 (CCRPS), 44–48 (CCVSS), 49–53 (CCRPQ), 54–58 (CCQSV), 59–63 (CCQPT), 69–73 (CCQTT), 74–78 (CCRTT), 84–88 (CCVSS), 89–93 (CCRPQ), 94–98 (CCQPA), 99–103 (CCQPT), 104–108 (CCRPS), 109–113 (CCETT), 114–118 (CCHPR), 119–123 (CCISS), 124–128 (CCRPS), 129–133 (CCVSS), 134–138 (CCKPQ), 139–143 (CCQSV), 144–148 (CCQPN), 149–153 (CCRPS), 159–163 (CCRPS), 164–168 (CCESS), 169–173 (CCRPC), and 174–178 (CCVRP). A 29 X 5 AA repeats of C-C-[RQVHIEK]-[SPTR]-[VSTQCRNP] region spans residues 24–178 (CCRPSCCETT…CCRPCCCVRP (155 aa)).

Belongs to the KRTAP type 4 family. In terms of assembly, interacts with hair keratins. As to expression, expressed in the hair follicles.

In terms of biological role, in the hair cortex, hair keratin intermediate filaments are embedded in an interfilamentous matrix, consisting of hair keratin-associated proteins (KRTAP), which are essential for the formation of a rigid and resistant hair shaft through their extensive disulfide bond cross-linking with abundant cysteine residues of hair keratins. The matrix proteins include the high-sulfur and high-glycine-tyrosine keratins. The protein is Keratin-associated protein 4-9 (KRTAP4-9) of Homo sapiens (Human).